The chain runs to 217 residues: Large ribosomal subunit protein uL29m (217 aa).

It belongs to the universal ribosomal protein uL29 family. Component of the mitochondrial large ribosomal subunit. Mature mitochondrial ribosomes consist of a small (37S) and a large (54S) subunit. The 37S subunit contains at least 33 different proteins and 1 molecule of RNA (15S). The 54S subunit contains at least 45 different proteins and 1 molecule of RNA (21S).

Its subcellular location is the mitochondrion. This chain is Large ribosomal subunit protein uL29m (mrpl4), found in Aspergillus fumigatus (strain ATCC MYA-4609 / CBS 101355 / FGSC A1100 / Af293) (Neosartorya fumigata).